The primary structure comprises 155 residues: Small ribosomal subunit protein uS7cz/uS7cy (155 aa).

The protein belongs to the universal ribosomal protein uS7 family. Part of the 30S ribosomal subunit.

The protein localises to the plastid. Its subcellular location is the chloroplast. Functionally, one of the primary rRNA binding proteins, it binds directly to 16S rRNA where it nucleates assembly of the head domain of the 30S subunit. The protein is Small ribosomal subunit protein uS7cz/uS7cy (rps7-A) of Ipomoea purpurea (Common morning glory).